A 185-amino-acid polypeptide reads, in one-letter code: uncharacterized protein (185 aa).

Residues 160–185 (QYTGPAVPSVPTTNLNDIGDPTKTVQ) form a disordered region.

This is an uncharacterized protein from Saccharomyces cerevisiae (strain ATCC 204508 / S288c) (Baker's yeast).